The following is a 55-amino-acid chain: Large ribosomal subunit protein bL33 (55 aa).

Belongs to the bacterial ribosomal protein bL33 family.

This Methylocella silvestris (strain DSM 15510 / CIP 108128 / LMG 27833 / NCIMB 13906 / BL2) protein is Large ribosomal subunit protein bL33.